We begin with the raw amino-acid sequence, 317 residues long: Peroxidase 64 (317 aa).

The N-terminal stretch at 1–22 (MNAHMLNLLVIVIFVVSFDVQA) is a signal peptide. Cystine bridges form between Cys32–Cys111, Cys65–Cys70, Cys117–Cys313, and Cys195–Cys227. His63 serves as the catalytic Proton acceptor. Asp64, Val67, Gly69, Asp71, and Ser73 together coordinate Ca(2+). Pro158 contributes to the substrate binding site. N-linked (GlcNAc...) asparagine glycosylation occurs at Asn163. His188 is a binding site for heme b. Thr189 is a binding site for Ca(2+). Positions 241, 243, and 248 each coordinate Ca(2+).

The protein belongs to the peroxidase family. Classical plant (class III) peroxidase subfamily. Heme b serves as cofactor. The cofactor is Ca(2+). As to expression, expressed in the whole plant, but preferentially in roots.

The protein localises to the secreted. It catalyses the reaction 2 a phenolic donor + H2O2 = 2 a phenolic radical donor + 2 H2O. Functionally, removal of H(2)O(2), oxidation of toxic reductants, biosynthesis and degradation of lignin, suberization, auxin catabolism, response to environmental stresses such as wounding, pathogen attack and oxidative stress. These functions might be dependent on each isozyme/isoform in each plant tissue. In Arabidopsis thaliana (Mouse-ear cress), this protein is Peroxidase 64 (PER64).